We begin with the raw amino-acid sequence, 1721 residues long: Ras guanine nucleotide exchange factor R (1721 aa).

Residues 148 to 279 (QLEDEVDLVH…LQQQQQQQRS (132 aa)) are a coiled coil. Disordered regions lie at residues 213-232 (QQQK…KEEK), 445-515 (SSLG…NQQP), 551-701 (ATTT…VDKQ), 716-766 (RTPL…KSPS), 797-837 (TITI…TPNK), and 929-981 (DEVS…DPVS). Over residues 216-232 (KHQEEKEKNDQKEKEEK) the composition is skewed to basic and acidic residues. Low complexity-rich tracts occupy residues 454–469 (SPEK…STSE), 479–493 (HNNN…STNN), 501–515 (PSLS…NQQP), and 551–581 (ATTT…LSIS). Residues 618–627 (NGTTSPRNNE) show a composition bias toward polar residues. Composition is skewed to low complexity over residues 628 to 651 (SSVT…VNTI) and 663 to 686 (TPTT…SQND). Basic and acidic residues predominate over residues 687-701 (KQNENNNKENFVDKQ). Low complexity-rich tracts occupy residues 724-748 (SSNS…TNSS), 797-836 (TITI…TTPN), and 933-952 (ESSS…NTPS). Residues 802–831 (NNNNNNNNNNNNNNNNNNNIQQQQQQQQQI) adopt a coiled-coil conformation. The span at 968–978 (NLSSINNSSYD) shows a compositional bias: polar residues. Residues 1291 to 1411 (GRYVPKAGTL…ILGGLIKKKE (121 aa)) form the N-terminal Ras-GEF domain. A Ras-GEF domain is found at 1447–1676 (NESEIARQLT…YQLSLIREPR (230 aa)).

Phosphorylated on threonine residues.

Its function is as follows. Promotes the exchange of Ras-bound GDP by GTP. May also play a role in the activation of rasG. The chain is Ras guanine nucleotide exchange factor R (gefR) from Dictyostelium discoideum (Social amoeba).